The following is a 128-amino-acid chain: Modulator protein MzrA (128 aa).

The Cytoplasmic portion of the chain corresponds to 1-11 (MMVMKRPSLRQ). A helical transmembrane segment spans residues 12–32 (FSWLLGGSLLLGALFWLWLAV). Over 33 to 128 (QQQEATLAIR…RLRDAPHRLG (96 aa)) the chain is Periplasmic.

It belongs to the MzrA family. As to quaternary structure, interacts with EnvZ.

Its subcellular location is the cell inner membrane. In terms of biological role, modulates the activity of the EnvZ/OmpR two-component regulatory system, probably by directly modulating EnvZ enzymatic activity and increasing stability of phosphorylated OmpR. The chain is Modulator protein MzrA from Klebsiella pneumoniae subsp. pneumoniae (strain ATCC 700721 / MGH 78578).